A 215-amino-acid chain; its full sequence is Thymidylate kinase (215 aa).

ATP is bound at residue 7 to 14 (GMEGSGKS).

The protein belongs to the thymidylate kinase family.

It carries out the reaction dTMP + ATP = dTDP + ADP. Functionally, phosphorylation of dTMP to form dTDP in both de novo and salvage pathways of dTTP synthesis. The protein is Thymidylate kinase of Nitratidesulfovibrio vulgaris (strain DSM 19637 / Miyazaki F) (Desulfovibrio vulgaris).